A 71-amino-acid polypeptide reads, in one-letter code: Sec-independent protein translocase protein TatA (71 aa).

The helical transmembrane segment at 1 to 21 (MGSFSIWHWLIVLVIVALIFG) threads the bilayer. The interval 48 to 71 (ADKTEQVTQQQTTIDVQAKEKQNS) is disordered.

The protein belongs to the TatA/E family. In terms of assembly, the Tat system comprises two distinct complexes: a TatABC complex, containing multiple copies of TatA, TatB and TatC subunits, and a separate TatA complex, containing only TatA subunits. Substrates initially bind to the TatABC complex, which probably triggers association of the separate TatA complex to form the active translocon.

The protein localises to the cell inner membrane. Part of the twin-arginine translocation (Tat) system that transports large folded proteins containing a characteristic twin-arginine motif in their signal peptide across membranes. TatA could form the protein-conducting channel of the Tat system. The protein is Sec-independent protein translocase protein TatA of Bordetella avium (strain 197N).